We begin with the raw amino-acid sequence, 476 residues long: Rifampicin monooxygenase (476 aa).

FAD contacts are provided by T12, E31, K32, Q98, L122, and T156. Rifampicin-binding residues include R196 and R213. Residues D277, L290, and N291 each contribute to the FAD site.

This sequence belongs to the rifampicin monooxygenase family. The cofactor is FAD.

It catalyses the reaction rifampicin + NADPH + O2 = rifampicin para-naphthoquinone carboxamide + NADP(+) + H2O + H(+). The catalysed reaction is rifampicin + NADH + O2 = rifampicin para-naphthoquinone carboxamide + NAD(+) + H2O + H(+). The enzyme catalyses rifamycin SV + NADPH + O2 = rifamycin SV para-naphthoquinone carboxamide + NADP(+) + H2O. It carries out the reaction rifamycin SV + NADH + O2 = rifamycin SV para-naphthoquinone carboxamide + NAD(+) + H2O. Its function is as follows. Monooxygenase that can modify rifampicin, thereby inactivating its antibiotic activity. Inactivates a broad range of rifamycin antibiotics. The polypeptide is Rifampicin monooxygenase (Streptomyces venezuelae (strain ATCC 10712 / CBS 650.69 / DSM 40230 / JCM 4526 / NBRC 13096 / PD 04745)).